A 102-amino-acid chain; its full sequence is MQKARIRLSGISPKDLDGVCNQVKSIAERTGVNISGPVPLPTKKLVVPTRKSPSGDGTATWDHWEMRVHKRLIDIAADERALRQLMRIQVPKDINIEIVLEG.

It belongs to the universal ribosomal protein uS10 family. In terms of assembly, part of the 30S ribosomal subunit.

Its function is as follows. Involved in the binding of tRNA to the ribosomes. The chain is Small ribosomal subunit protein uS10 from Methanosarcina mazei (strain ATCC BAA-159 / DSM 3647 / Goe1 / Go1 / JCM 11833 / OCM 88) (Methanosarcina frisia).